A 686-amino-acid polypeptide reads, in one-letter code: Translation initiation factor IF-2 (686 aa).

Residues 54-105 (KPSVADEFEVEEKVVRSKKNSNKKKKKGKGNEDKRQENFAGRQQTQTVETPD) form a disordered region. Residues 69 to 81 (RSKKNSNKKKKKG) are compositionally biased toward basic residues. The tr-type G domain maps to 188 to 357 (ERPAVVTIMG…LLISEVEEYK (170 aa)). Residues 197 to 204 (GHVDHGKT) form a G1 region. 197 to 204 (GHVDHGKT) is a GTP binding site. Positions 222–226 (GITQH) are G2. The tract at residues 243-246 (DTPG) is G3. Residues 243–247 (DTPGH) and 297–300 (NKMD) contribute to the GTP site. The G4 stretch occupies residues 297–300 (NKMD). Residues 333–335 (SAI) are G5.

The protein belongs to the TRAFAC class translation factor GTPase superfamily. Classic translation factor GTPase family. IF-2 subfamily.

The protein resides in the cytoplasm. In terms of biological role, one of the essential components for the initiation of protein synthesis. Protects formylmethionyl-tRNA from spontaneous hydrolysis and promotes its binding to the 30S ribosomal subunits. Also involved in the hydrolysis of GTP during the formation of the 70S ribosomal complex. In Bacillus anthracis (strain A0248), this protein is Translation initiation factor IF-2.